Reading from the N-terminus, the 426-residue chain is PHD finger-containing protein 6 (426 aa).

The PHD-type zinc-finger motif lies at 9 to 59 (RSICETCGHQGWKNSLVTCSKCRIACEHCYCMRESSFETSIHFVCADCSMR). Zn(2+)-binding residues include C12, C15, C27, C30, H36, C39, C53, and C56. Disordered regions lie at residues 122 to 144 (TFRVPRPVSARPPMGLTKPTAGF) and 185 to 205 (RQASKAQAVGEGSKSKVGDGA).

Interacts directly with AIPP3/BDT1.

Together with AIPP3/BDT1, cooperates to form a BAH-PHD bivalent histone reader complex able to read histone H3 lysine 27 trimethylation (H3K27me3) histone marks in order to regulate transcription, especially to prevent early flowering; promotes AIPP3/BDT1 binding to H3K27me3. This Arabidopsis thaliana (Mouse-ear cress) protein is PHD finger-containing protein 6.